Consider the following 142-residue polypeptide: Transcriptional regulator MraZ (142 aa).

SpoVT-AbrB domains lie at 5 to 51 (ASSL…PRPE) and 77 to 120 (AMDV…DKAT).

Belongs to the MraZ family. Forms oligomers.

It is found in the cytoplasm. The protein localises to the nucleoid. The chain is Transcriptional regulator MraZ from Variovorax paradoxus (strain S110).